The chain runs to 107 residues: uncharacterized protein (107 aa).

This is an uncharacterized protein from Methanocaldococcus jannaschii (strain ATCC 43067 / DSM 2661 / JAL-1 / JCM 10045 / NBRC 100440) (Methanococcus jannaschii).